The chain runs to 147 residues: Small ribosomal subunit protein bS16 (147 aa).

Residues 81–147 (QKFTGDTSPS…GDNSGEKAEA (67 aa)) form a disordered region. Basic and acidic residues-rich tracts occupy residues 95–104 (QPERPNKDDL) and 114–125 (EAPREAITKKSE). Low complexity predominate over residues 126 to 140 (GAAADEASESAAGDN).

This sequence belongs to the bacterial ribosomal protein bS16 family.

The protein is Small ribosomal subunit protein bS16 of Cutibacterium acnes (strain DSM 16379 / KPA171202) (Propionibacterium acnes).